A 310-amino-acid chain; its full sequence is Methionyl-tRNA formyltransferase (310 aa).

110–113 contributes to the (6S)-5,6,7,8-tetrahydrofolate binding site; the sequence is SLLP.

It belongs to the Fmt family.

It carries out the reaction L-methionyl-tRNA(fMet) + (6R)-10-formyltetrahydrofolate = N-formyl-L-methionyl-tRNA(fMet) + (6S)-5,6,7,8-tetrahydrofolate + H(+). Functionally, attaches a formyl group to the free amino group of methionyl-tRNA(fMet). The formyl group appears to play a dual role in the initiator identity of N-formylmethionyl-tRNA by promoting its recognition by IF2 and preventing the misappropriation of this tRNA by the elongation apparatus. This is Methionyl-tRNA formyltransferase from Halorhodospira halophila (strain DSM 244 / SL1) (Ectothiorhodospira halophila (strain DSM 244 / SL1)).